The primary structure comprises 389 residues: uncharacterized protein (389 aa).

This sequence belongs to the mimivirus L17x/L18x family.

This is an uncharacterized protein from Acanthamoeba polyphaga mimivirus (APMV).